The chain runs to 390 residues: Ribonucleoside-diphosphate reductase subunit M2 (390 aa).

Phosphoserine is present on Ser-20. Thr-33 is modified (phosphothreonine). The Cy motif lies at 49–51 (RRI). Fe cation-binding residues include Asp-139, Glu-170, and His-173. Tyr-177 is a catalytic residue. Residues Glu-233, Glu-267, and His-270 each coordinate Fe cation.

Belongs to the ribonucleoside diphosphate reductase small chain family. As to quaternary structure, heterodimer of a large and a small subunit. Interacts (via Cy motif and when phosphorylated at Thr-33) with CCNF; the interaction occurs exclusively in G2 and early M. Requires Fe cation as cofactor. Phosphorylation on Ser-20 relieves the inhibitory effect on Wnt signaling. Phosphorylated on Thr-33 by CDK1 and CDK2; predominantly in G2 and M phase. Post-translationally, ubiquitinated by the SCF(CCNF) E3 ubiquitin-protein ligase complex; leading to its degradation by the proteasome.

Its subcellular location is the cytoplasm. The protein resides in the nucleus. The catalysed reaction is a 2'-deoxyribonucleoside 5'-diphosphate + [thioredoxin]-disulfide + H2O = a ribonucleoside 5'-diphosphate + [thioredoxin]-dithiol. In terms of biological role, provides the precursors necessary for DNA synthesis. Catalyzes the biosynthesis of deoxyribonucleotides from the corresponding ribonucleotides. Inhibits Wnt signaling. The chain is Ribonucleoside-diphosphate reductase subunit M2 (Rrm2) from Rattus norvegicus (Rat).